We begin with the raw amino-acid sequence, 6857 residues long: Replicase polyprotein 1ab (6857 aa).

One can recognise a Macro domain in the interval Phe-1679–Lys-1860. The segment at Gln-2158 to Pro-2191 is disordered. 10 consecutive transmembrane segments (helical) span residues Leu-2303–Leu-2323, Thr-2330–Trp-2350, Leu-2385–Val-2405, Leu-2535–Phe-2555, Val-2639–Leu-2659, Phe-2664–Phe-2684, Thr-2889–Gly-2909, Ile-3057–Leu-3077, Val-3106–Trp-3126, and Leu-3142–Phe-3162. Residues Leu-2303–Leu-2683 form an HD1 region. An HD2 region spans residues Thr-2889–Phe-3162. Residues His-3304, Glu-3347, and Ser-3416 each act as charge relay system; for 3C-like serine proteinase activity in the active site. Residues His-3555–Phe-3738 form an HD3 region. The next 7 membrane-spanning stretches (helical) occupy residues Leu-3556–Leu-3575, Ser-3580–Phe-3602, Leu-3611–Leu-3631, Ser-3640–Val-3660, Ala-3663–Val-3683, Ala-3698–Phe-3718, and Leu-3723–Phe-3738. Positions Asp-4566 to Tyr-4797 constitute a NiRAN domain. The RdRp catalytic domain maps to Phe-5105–Phe-5256. Residues Phe-5413 to Val-5528 enclose the CV ZBD domain. Zn(2+)-binding residues include Cys-5417, Cys-5420, Cys-5428, Cys-5431, Cys-5438, Cys-5441, His-5445, His-5451, Cys-5460, Cys-5462, Cys-5483, and Cys-5486. Residues Asn-5633–Leu-5812 form the (+)RNA virus helicase ATP-binding domain. A (+)RNA virus helicase C-terminal domain is found at Thr-5813–Asn-5972. The ExoN domain maps to Asp-5970–Lys-6183. Catalysis depends on residues Asp-5984, Glu-5986, and Asp-6085. His-6149, Cys-6153, and His-6157 together coordinate Zn(2+). Active-site residues include His-6161 and Asp-6166. Cys-6172 provides a ligand contact to Zn(2+). Positions Leu-6451–Pro-6591 constitute a NendoU domain. Catalysis depends on residues His-6487, His-6504, Lys-6536, Lys-6633, Asp-6709, Lys-6737, and Glu-6771. The region spanning Lys-6593 to His-6857 is the Nidovirus-type SAM-dependent 2'-O-MTase domain.

Specific enzymatic cleavages in vivo by its own protease yield mature proteins. 3CL-PRO is autocatalytically processed.

It localises to the host membrane. It carries out the reaction RNA(n) + a ribonucleoside 5'-triphosphate = RNA(n+1) + diphosphate. It catalyses the reaction ATP + H2O = ADP + phosphate + H(+). Functionally, the 3C-like serine proteinase is responsible for the majority of cleavages. Its function is as follows. The helicase which contains a zinc finger structure displays RNA and DNA duplex-unwinding activities with 5' to 3' polarity. In terms of biological role, acts on both ssRNA and dsRNA in a 3' to 5' direction. NendoU is a Mn(2+)-dependent, uridylate-specific enzyme, which leaves 2'-3'-cyclic phosphates 5' to the cleaved bond. This chain is Replicase polyprotein 1ab (rep), found in Equus caballus (Horse).